The chain runs to 155 residues: Ribosomal RNA large subunit methyltransferase H (155 aa).

Residues Leu-73, Gly-104, and 123 to 128 (LSRMTF) each bind S-adenosyl-L-methionine.

It belongs to the RNA methyltransferase RlmH family. In terms of assembly, homodimer.

The protein localises to the cytoplasm. It carries out the reaction pseudouridine(1915) in 23S rRNA + S-adenosyl-L-methionine = N(3)-methylpseudouridine(1915) in 23S rRNA + S-adenosyl-L-homocysteine + H(+). Its function is as follows. Specifically methylates the pseudouridine at position 1915 (m3Psi1915) in 23S rRNA. The polypeptide is Ribosomal RNA large subunit methyltransferase H (Methylococcus capsulatus (strain ATCC 33009 / NCIMB 11132 / Bath)).